The following is a 659-amino-acid chain: Ion-translocating oxidoreductase complex subunit C (659 aa).

4Fe-4S ferredoxin-type domains lie at threonine 366–tyrosine 397 and lysine 407–tyrosine 436. [4Fe-4S] cluster contacts are provided by cysteine 377, cysteine 380, cysteine 383, cysteine 387, cysteine 416, cysteine 419, cysteine 422, and cysteine 426.

Belongs to the 4Fe4S bacterial-type ferredoxin family. RnfC subfamily. The complex is composed of six subunits: RnfA, RnfB, RnfC, RnfD, RnfE and RnfG. Requires [4Fe-4S] cluster as cofactor.

It localises to the cell inner membrane. Functionally, part of a membrane-bound complex that couples electron transfer with translocation of ions across the membrane. The polypeptide is Ion-translocating oxidoreductase complex subunit C (Yersinia pseudotuberculosis serotype IB (strain PB1/+)).